The primary structure comprises 636 residues: Eukaryotic peptide chain release factor GTP-binding subunit ERF3A (636 aa).

Composition is skewed to gly residues over residues 1 to 16 (MDPSSGGGGGGGGGGS) and 103 to 116 (AAGGDHGAGSGAGG). 2 disordered regions span residues 1-54 (MDPS…AAVA) and 90-206 (LRGP…PPGA). The span at 121–138 (VESSQDQSCEGSNSTVSM) shows a compositional bias: polar residues. Positions 183–193 (STQEMMEEEEE) are enriched in acidic residues. The tr-type G domain maps to 209 to 435 (KEHVNVVFIG…DNLPNFNRSV (227 aa)). A G1 region spans residues 218–225 (GHVDAGKS). 221–226 (DAGKST) contacts GTP. The G2 stretch occupies residues 274–278 (GKTVE). The G3 stretch occupies residues 295 to 298 (DAPG). GTP is bound by residues 357–360 (NKMD) and 399–401 (SGL). A G4 region spans residues 357 to 360 (NKMD). The tract at residues 399-401 (SGL) is G5.

The protein belongs to the TRAFAC class translation factor GTPase superfamily. Classic translation factor GTPase family. ERF3 subfamily. As to quaternary structure, component of the eRF1-eRF3-GTP ternary complex, composed of ETF1/ERF1 and ERF3 (GSPT1/ERF3A or GSPT2/ERF3B) and GTP. Component of the transient SURF (SMG1-UPF1-eRF1-eRF3) complex. The ETF1-GSPT1 complex interacts with JMJD4. Interacts with PABPC1. Interacts with SHFL.

It catalyses the reaction GTP + H2O = GDP + phosphate + H(+). In terms of biological role, GTPase component of the eRF1-eRF3-GTP ternary complex, a ternary complex that mediates translation termination in response to the termination codons UAA, UAG and UGA. GSPT1/ERF3A mediates ETF1/ERF1 delivery to stop codons: The eRF1-eRF3-GTP complex binds to a stop codon in the ribosomal A-site. GTP hydrolysis by GSPT1/ERF3A induces a conformational change that leads to its dissociation, permitting ETF1/ERF1 to accommodate fully in the A-site. Component of the transient SURF complex which recruits UPF1 to stalled ribosomes in the context of nonsense-mediated decay (NMD) of mRNAs containing premature stop codons. Required for SHFL-mediated translation termination which inhibits programmed ribosomal frameshifting (-1PRF) of mRNA from viruses and cellular genes. This Mus musculus (Mouse) protein is Eukaryotic peptide chain release factor GTP-binding subunit ERF3A (Gspt1).